A 211-amino-acid chain; its full sequence is 5-formyltetrahydrofolate cyclo-ligase (211 aa).

ATP is bound at residue 4–8; it reads KQLLR. Substrate is bound by residues Glu56 and 152 to 156; that span reads HGAGY. ATP-binding positions include 151 to 158 and Asp194; that span reads GHGAGYYD.

Belongs to the 5-formyltetrahydrofolate cyclo-ligase family. Post-translationally, N-glycosylated.

It localises to the mitochondrion. It carries out the reaction (6S)-5-formyl-5,6,7,8-tetrahydrofolate + ATP = (6R)-5,10-methenyltetrahydrofolate + ADP + phosphate. Functionally, only enzyme known to utilize 5-formyltetrahydrofolate (folinic acid) as substrate. Contributes to tetrahydrofolate metabolism in an alternative way of folate biosynthesis. May regulate carbon flow through the folate-dependent one-carbon metabolic network that supplies carbon for the biosynthesis of purines, thymidine and amino acids. This Saccharomyces cerevisiae (strain ATCC 204508 / S288c) (Baker's yeast) protein is 5-formyltetrahydrofolate cyclo-ligase (FAU1).